Here is a 185-residue protein sequence, read N- to C-terminus: Peptide deformylase (185 aa).

Fe cation-binding residues include C112 and H155. E156 is an active-site residue. H159 serves as a coordination point for Fe cation.

The protein belongs to the polypeptide deformylase family. The cofactor is Fe(2+).

It catalyses the reaction N-terminal N-formyl-L-methionyl-[peptide] + H2O = N-terminal L-methionyl-[peptide] + formate. Its function is as follows. Removes the formyl group from the N-terminal Met of newly synthesized proteins. Requires at least a dipeptide for an efficient rate of reaction. N-terminal L-methionine is a prerequisite for activity but the enzyme has broad specificity at other positions. The sequence is that of Peptide deformylase from Latilactobacillus sakei subsp. sakei (strain 23K) (Lactobacillus sakei subsp. sakei).